Here is a 270-residue protein sequence, read N- to C-terminus: 4-hydroxy-4-methyl-2-oxoglutarate aldolase tasA (270 aa).

The Proton acceptor role is filled by histidine 49. Residues glutamate 156 and aspartate 182 each contribute to the a divalent metal cation site. Aspartate 182 contacts substrate.

It belongs to the HpcH/HpaI aldolase family. Homohexamer; trimer of dimers. Requires Co(2+) as cofactor. Mn(2+) is required as a cofactor. Zn(2+) serves as cofactor. The cofactor is Fe(2+). It depends on Mg(2+) as a cofactor.

It catalyses the reaction 4-hydroxy-4-methyl-2-oxoglutarate = 2 pyruvate. Its pathway is secondary metabolite biosynthesis. Its function is as follows. 4-hydroxy-4-methyl-2-oxoglutarate aldolase; part of the gene cluster that mediates the biosynthesis of the tetramic acids Sch210971 and Sch210972, potential anti-HIV fungal natural product that contain a decalin core. The PKS module of tasS together with the enoylreductase tasC catalyze the formation of the polyketide unit which is then conjugated to 4-hydroxyl-4-methyl glutamate (HMG) by the condensation domain of the tasS NRPS module. One unique structural feature of Sch210971 and Sch210972 is the tetramic acid motif proposed to be derived from the non-proteinogenic amino acid HMG, by a Dieckmann-type condensation catalyzed by the reductase domain of tasS. The aldolase tasA catalyzes the aldol condensation of 2 molecules of pyruvic acid to yield the intermediate 4-hydroxyl-4-methyl-2-oxoglutarate (HMOG), which can then be stereoselectively transaminated, may be by tasG, to form HMG. The Diels-Alderase tas3 then uses the Dieckmann product of tasS as substrate and catalyzes the Diels-Alder cycloaddition to form the decalin ring of Sch210971 and Sch210972. The protein is 4-hydroxy-4-methyl-2-oxoglutarate aldolase tasA of Hapsidospora irregularis.